A 480-amino-acid polypeptide reads, in one-letter code: Gasdermin-C4 (480 aa).

The tract at residues 1-226 (MGYSFDRASK…TCVILPSATK (226 aa)) is triggers pyroptosis.

Belongs to the gasdermin family. Homooligomer; homooligomeric ring-shaped pore complex containing 27-28 subunits when inserted in the membrane. In terms of processing, cleavage by CASP8 relieves autoinhibition by releasing the N-terminal moiety (Gasdermin-C4, N-terminal) that initiates pyroptosis. Post-translationally, palmitoylated.

It localises to the cytoplasm. The protein localises to the cytosol. Its subcellular location is the cell membrane. Its activity is regulated as follows. The full-length protein before cleavage is inactive: intramolecular interactions between N- and C-terminal domains mediate autoinhibition in the absence of activation signal. The intrinsic pyroptosis-inducing activity is carried by the released N-terminal moiety (Gasdermin-C4, N-terminal) following cleavage by caspase CASP8. Functionally, this form constitutes the precursor of the pore-forming protein: upon cleavage, the released N-terminal moiety (Gasdermin-C4, N-terminal) binds to membranes and forms pores, triggering pyroptosis. Pore-forming protein that causes membrane permeabilization and pyroptosis. Produced by the cleavage of gasdermin-C4 by caspase CASP8 in response to death signals. After cleavage, moves to the plasma membrane where it strongly binds to membrane inner leaflet lipids. Homooligomerizes within the membrane and forms pores of 10-15 nanometers (nm) of inner diameter, triggering pyroptosis. In Mus musculus (Mouse), this protein is Gasdermin-C4.